The primary structure comprises 298 residues: ADP/ATP translocase 2 (298 aa).

Methionine 1 is subject to N-acetylmethionine. Over 1–7 (MTDAAVS) the chain is Mitochondrial intermembrane. Residue threonine 2 is modified to N-acetylthreonine; in ADP/ATP translocase 2, N-terminally processed. The stretch at 6–98 (VSFAKDFLAG…FAFKDKYKQI (93 aa)) is one Solcar 1 repeat. A Phosphoserine modification is found at serine 7. The chain crosses the membrane as a helical span at residues 8–37 (FAKDFLAGGVAAAISKTAVAPIERVKLLLQ). Lysine 23 carries the post-translational modification N6-malonyllysine. Over 38 to 74 (VQHASKQITADKQYKGIIDCVVRIPKEQGVLSFWRGN) the chain is Mitochondrial matrix. An N6-succinyllysine modification is found at lysine 43. An N6,N6,N6-trimethyllysine; alternate modification is found at lysine 52. Lysine 52 bears the N6,N6-dimethyllysine; alternate mark. Lysine 52 is subject to N6-methyllysine; alternate. Residues 75–99 (LANVIRYFPTQALNFAFKDKYKQIF) traverse the membrane as a helical segment. ADP is bound by residues arginine 80 and lysine 92. Lysine 92 and lysine 96 each carry N6-malonyllysine. Over 100 to 109 (LGGVDKRTQF) the chain is Mitochondrial intermembrane. The residue at position 105 (lysine 105) is an N6-acetyllysine; alternate. Lysine 105 is subject to N6-succinyllysine; alternate. The chain crosses the membrane as a helical span at residues 110-130 (WRYFAGNLASGGAAGATSLCF). 2 Solcar repeats span residues 111 to 201 (RYFA…AKGM) and 212 to 297 (ISWM…IKKY). At 131–178 (VYPLDFARTRLAADVGKAGAEREFKGLGDCLVKIYKSDGIKGLYQGFN) the chain is on the mitochondrial matrix side. At lysine 147 the chain carries N6-methyllysine; alternate. N6-acetyllysine; alternate occurs at positions 147 and 155. 2 positions are modified to N6-succinyllysine; alternate: lysine 147 and lysine 155. Lysine 147 is subject to N6-malonyllysine; alternate. N6-acetyllysine is present on residues lysine 163 and lysine 166. A helical membrane pass occupies residues 179 to 199 (VSVQGIIIYRAAYFGIYDTAK). Over 200 to 210 (GMLPDPKNTHI) the chain is Mitochondrial intermembrane. Residues 211–231 (FISWMIAQSVTAVAGLTSYPF) form a helical membrane-spanning segment. The Mitochondrial matrix portion of the chain corresponds to 232–273 (DTVRRRMMMQSGRKGTDIMYTGTLDCWRKIARDEGGKAFFKG). ADP is bound at residue arginine 235. The tract at residues 235 to 240 (RRRMMM) is important for transport activity. A Nucleotide carrier signature motif motif is present at residues 235 to 240 (RRRMMM). At lysine 268 the chain carries N6-acetyllysine; alternate. An N6-succinyllysine; alternate modification is found at lysine 268. Residues 274-291 (AWSNVLRGMGGAFVLVLY) traverse the membrane as a helical segment. Residues 292–298 (DEIKKYT) lie on the Mitochondrial intermembrane side of the membrane.

Belongs to the mitochondrial carrier (TC 2.A.29) family. As to quaternary structure, monomer. Component of the MMXD complex, which includes CIAO1, ERCC2, CIAO2B, MMS19 and SLC25A5/ANT2. Interacts with AK4. Interacts with TIMM44; leading to inhibit the presequence translocase TIMM23, thereby promoting stabilization of PINK1. In terms of processing, trimethylated by ANTKMT at Lys-52. As to expression, present in kidney, brain, heart, liver and skeletal muscle.

It localises to the mitochondrion inner membrane. The protein localises to the membrane. The catalysed reaction is ADP(in) + ATP(out) = ADP(out) + ATP(in). It carries out the reaction H(+)(in) = H(+)(out). With respect to regulation, the matrix-open state (m-state) is inhibited by the membrane-permeable bongkrekic acid (BKA). The cytoplasmic-open state (c-state) is inhibited by the membrane-impermeable toxic inhibitor carboxyatractyloside (CATR). Proton transporter activity is inhibited by ADP:ATP antiporter activity. ADP:ATP antiporter that mediates import of ADP into the mitochondrial matrix for ATP synthesis, and export of ATP out to fuel the cell. Cycles between the cytoplasmic-open state (c-state) and the matrix-open state (m-state): operates by the alternating access mechanism with a single substrate-binding site intermittently exposed to either the cytosolic (c-state) or matrix (m-state) side of the inner mitochondrial membrane. In addition to its ADP:ATP antiporter activity, also involved in mitochondrial uncoupling and mitochondrial permeability transition pore (mPTP) activity. Plays a role in mitochondrial uncoupling by acting as a proton transporter: proton transport uncouples the proton flows via the electron transport chain and ATP synthase to reduce the efficiency of ATP production and cause mitochondrial thermogenesis. Proton transporter activity is inhibited by ADP:ATP antiporter activity, suggesting that SLC25A5/ANT2 acts as a master regulator of mitochondrial energy output by maintaining a delicate balance between ATP production (ADP:ATP antiporter activity) and thermogenesis (proton transporter activity). Proton transporter activity requires free fatty acids as cofactor, but does not transport it. Probably mediates mitochondrial uncoupling in tissues that do not express UCP1. Also plays a key role in mPTP opening, a non-specific pore that enables free passage of the mitochondrial membranes to solutes of up to 1.5 kDa, and which contributes to cell death. It is however unclear if SLC25A5/ANT2 constitutes a pore-forming component of mPTP or regulates it. Acts as a regulator of mitophagy independently of ADP:ATP antiporter activity: promotes mitophagy via interaction with TIMM44, leading to inhibit the presequence translocase TIMM23, thereby promoting stabilization of PINK1. As part of the mitotic spindle-associated MMXD complex it may play a role in chromosome segregation. This chain is ADP/ATP translocase 2, found in Rattus norvegicus (Rat).